The sequence spans 435 residues: Salicylate hydroxylase (435 aa).

12-41 (RVAIVGGGISGLALALSLCKHSHLNVQLFE) serves as a coordination point for FAD.

Requires FAD as cofactor.

It carries out the reaction salicylate + NADH + O2 + 2 H(+) = catechol + CO2 + NAD(+) + H2O. It functions in the pathway aromatic compound metabolism; naphthalene degradation. The chain is Salicylate hydroxylase (nahG) from Pseudomonas putida (Arthrobacter siderocapsulatus).